The primary structure comprises 421 residues: 3-isopropylmalate dehydratase large subunit (421 aa).

The [4Fe-4S] cluster site is built by cysteine 292, cysteine 352, and cysteine 355.

It belongs to the aconitase/IPM isomerase family. LeuC type 2 subfamily. As to quaternary structure, heterodimer of LeuC and LeuD. [4Fe-4S] cluster serves as cofactor.

The catalysed reaction is (2R,3S)-3-isopropylmalate = (2S)-2-isopropylmalate. It participates in amino-acid biosynthesis; L-leucine biosynthesis; L-leucine from 3-methyl-2-oxobutanoate: step 2/4. Its function is as follows. Catalyzes the isomerization between 2-isopropylmalate and 3-isopropylmalate, via the formation of 2-isopropylmaleate. This chain is 3-isopropylmalate dehydratase large subunit, found in Herpetosiphon aurantiacus (strain ATCC 23779 / DSM 785 / 114-95).